The chain runs to 466 residues: MDQKLLTDFRSELLDSRFGAKAISTIAESKRFPLHEMRDDVAFQIINDELYLDGNARQNLATFCQTWDDENVHKLMDLSINKNWIDKEEYPQSAAIDLRCVNMVADLWHAPAPKNGQAVGTNTIGSSEACMLGGMAMKWRWRKRMEAAGKPTDKPNLVCGPVQICWHKFARYWDVELREIPMRPGQLFMDPKRMIEACDENTIGVVPTFGVTYTGNYEFPQPLHDALDKFQADTGIDIDMHIDAASGGFLAPFVAPDIVWDFRLPRVKSISASGHKFGLAPLGCGWVIWRDEEALPQELVFNVDYLGGQIGTFAINFSRPAGQVIAQYYEFLRLGREGYTKVQNASYQVAAYLADEIAKLGPYEFICTGRPDEGIPAVCFKLKDGEDPGYTLYDLSERLRLRGWQVPAFTLGGEATDIVVMRIMCRRGFEMDFAELLLEDYKASLKYLSDHPKLQGIAQQNSFKHT.

Residues T62 and N83 each contribute to the substrate site. Pyridoxal 5'-phosphate contacts are provided by residues 126–127, T212, and H275; that span reads SS. At K276 the chain carries N6-(pyridoxal phosphate)lysine.

The protein belongs to the group II decarboxylase family. As to quaternary structure, homohexamer. Pyridoxal 5'-phosphate serves as cofactor.

The enzyme catalyses L-glutamate + H(+) = 4-aminobutanoate + CO2. Functionally, converts glutamate to gamma-aminobutyrate (GABA), consuming one intracellular proton in the reaction. The gad system helps to maintain a near-neutral intracellular pH when cells are exposed to extremely acidic conditions. The ability to survive transit through the acidic conditions of the stomach is essential for successful colonization of the mammalian host by commensal and pathogenic bacteria. The chain is Glutamate decarboxylase alpha (gadA) from Escherichia coli O6:H1 (strain CFT073 / ATCC 700928 / UPEC).